The following is a 426-amino-acid chain: Histidine--tRNA ligase (426 aa).

It belongs to the class-II aminoacyl-tRNA synthetase family. In terms of assembly, homodimer.

It localises to the cytoplasm. The catalysed reaction is tRNA(His) + L-histidine + ATP = L-histidyl-tRNA(His) + AMP + diphosphate + H(+). This chain is Histidine--tRNA ligase, found in Streptococcus thermophilus (strain ATCC BAA-491 / LMD-9).